A 981-amino-acid chain; its full sequence is Isoleucine--tRNA ligase (981 aa).

Positions 50–60 match the 'HIGH' region motif; that stretch reads PTTNGMPHVGH. The 'KMSKS' region motif lies at 604–608; that stretch reads KMSKS. K607 is a binding site for ATP.

This sequence belongs to the class-I aminoacyl-tRNA synthetase family. IleS type 2 subfamily. As to quaternary structure, monomer. It depends on Zn(2+) as a cofactor.

Its subcellular location is the cytoplasm. It catalyses the reaction tRNA(Ile) + L-isoleucine + ATP = L-isoleucyl-tRNA(Ile) + AMP + diphosphate. Functionally, catalyzes the attachment of isoleucine to tRNA(Ile). As IleRS can inadvertently accommodate and process structurally similar amino acids such as valine, to avoid such errors it has two additional distinct tRNA(Ile)-dependent editing activities. One activity is designated as 'pretransfer' editing and involves the hydrolysis of activated Val-AMP. The other activity is designated 'posttransfer' editing and involves deacylation of mischarged Val-tRNA(Ile). The chain is Isoleucine--tRNA ligase from Pyrobaculum aerophilum (strain ATCC 51768 / DSM 7523 / JCM 9630 / CIP 104966 / NBRC 100827 / IM2).